Consider the following 162-residue polypeptide: Lipoprotein signal peptidase (162 aa).

2 helical membrane passes run 56-76 and 84-104; these read FLPP…VVWY and SPLF…NLID. Residues D113 and D139 contribute to the active site. Residues 132 to 152 form a helical membrane-spanning segment; sequence WPIFNVADSCITIGACMIVLF.

Belongs to the peptidase A8 family.

It localises to the cell inner membrane. It catalyses the reaction Release of signal peptides from bacterial membrane prolipoproteins. Hydrolyzes -Xaa-Yaa-Zaa-|-(S,diacylglyceryl)Cys-, in which Xaa is hydrophobic (preferably Leu), and Yaa (Ala or Ser) and Zaa (Gly or Ala) have small, neutral side chains.. Its pathway is protein modification; lipoprotein biosynthesis (signal peptide cleavage). In terms of biological role, this protein specifically catalyzes the removal of signal peptides from prolipoproteins. The chain is Lipoprotein signal peptidase from Chlorobaculum tepidum (strain ATCC 49652 / DSM 12025 / NBRC 103806 / TLS) (Chlorobium tepidum).